Reading from the N-terminus, the 401-residue chain is Alpha-(1,4)-fucosyltransferase (401 aa).

At 1-4 (MPMR) the chain is on the cytoplasmic side. The helical; Signal-anchor for type II membrane protein transmembrane segment at 5 to 27 (YLNAMAALLMMFFTLLILSFTGI) threads the bilayer. Residues 28–401 (LEFPSASTSM…SRRGGKNAGV (374 aa)) are Lumenal-facing. Asn-85 carries N-linked (GlcNAc...) asparagine glycosylation.

It belongs to the glycosyltransferase 10 family. Present in root, stem, flower buds and green siliques.

It is found in the golgi apparatus. The protein resides in the golgi stack membrane. It participates in protein modification; protein glycosylation. In terms of biological role, may be involved in cell wall synthesis. Catalyzes alpha-1,4 glycosidic linkages and generates Lewis-a epitopes. The protein is Alpha-(1,4)-fucosyltransferase (FUT13) of Arabidopsis thaliana (Mouse-ear cress).